The sequence spans 413 residues: Multifunctional CCA protein (413 aa).

ATP contacts are provided by Gly8 and Arg11. CTP contacts are provided by Gly8 and Arg11. Residues Asp21 and Asp23 each contribute to the Mg(2+) site. ATP contacts are provided by Arg91, Arg143, and Arg146. Residues Arg91, Arg143, and Arg146 each contribute to the CTP site. An HD domain is found at 232–333 (TGVHVMMVID…VRLLERADAL (102 aa)).

The protein belongs to the tRNA nucleotidyltransferase/poly(A) polymerase family. Bacterial CCA-adding enzyme type 1 subfamily. In terms of assembly, monomer. Can also form homodimers and oligomers. Mg(2+) serves as cofactor. It depends on Ni(2+) as a cofactor.

It carries out the reaction a tRNA precursor + 2 CTP + ATP = a tRNA with a 3' CCA end + 3 diphosphate. The catalysed reaction is a tRNA with a 3' CCA end + 2 CTP + ATP = a tRNA with a 3' CCACCA end + 3 diphosphate. In terms of biological role, catalyzes the addition and repair of the essential 3'-terminal CCA sequence in tRNAs without using a nucleic acid template. Adds these three nucleotides in the order of C, C, and A to the tRNA nucleotide-73, using CTP and ATP as substrates and producing inorganic pyrophosphate. tRNA 3'-terminal CCA addition is required both for tRNA processing and repair. Also involved in tRNA surveillance by mediating tandem CCA addition to generate a CCACCA at the 3' terminus of unstable tRNAs. While stable tRNAs receive only 3'-terminal CCA, unstable tRNAs are marked with CCACCA and rapidly degraded. The protein is Multifunctional CCA protein of Burkholderia mallei (strain NCTC 10247).